Consider the following 304-residue polypeptide: Large ribosomal subunit protein uL2 (304 aa).

The disordered stretch occupies residues 246–282; it reads HTRGTAMNPVDHPHGGGEGRTRGKHPESPWGWKTKGY. Over residues 256–272 the composition is skewed to basic and acidic residues; that stretch reads DHPHGGGEGRTRGKHPE.

It belongs to the universal ribosomal protein uL2 family. In terms of assembly, part of the 50S ribosomal subunit. Forms a bridge to the 30S subunit in the 70S ribosome.

Functionally, one of the primary rRNA binding proteins. Required for association of the 30S and 50S subunits to form the 70S ribosome, for tRNA binding and peptide bond formation. It has been suggested to have peptidyltransferase activity; this is somewhat controversial. Makes several contacts with the 16S rRNA in the 70S ribosome. This Aquifex aeolicus (strain VF5) protein is Large ribosomal subunit protein uL2.